Here is a 1303-residue protein sequence, read N- to C-terminus: D-lysergyl-peptide-synthetase subunit 2 (1303 aa).

Positions 256 to 653 (EWCRWTPSAV…CRKSTQVKLR (398 aa)) are adenylation (A) domain. The Carrier domain occupies 793–869 (APSNDIEEAF…ELARHTKLVA (77 aa)). An O-(pantetheine 4'-phosphoryl)serine modification is found at S830. Positions 905–1294 (EDVYPCTPLQ…HAAPRTLIGD (390 aa)) are condensation (C) domain.

It belongs to the NRP synthetase family.

Its pathway is alkaloid biosynthesis; ergot alkaloid biosynthesis. In terms of biological role, D-lysergyl-peptide-synthetase subunit 2; part of the gene cluster that mediates the biosynthesis of fungal ergot alkaloid. DmaW catalyzes the first step of ergot alkaloid biosynthesis by condensing dimethylallyl diphosphate (DMAP) and tryptophan to form 4-dimethylallyl-L-tryptophan. The second step is catalyzed by the methyltransferase easF that methylates 4-dimethylallyl-L-tryptophan in the presence of S-adenosyl-L-methionine, resulting in the formation of 4-dimethylallyl-L-abrine. The catalase easC and the FAD-dependent oxidoreductase easE then transform 4-dimethylallyl-L-abrine to chanoclavine-I which is further oxidized by easD in the presence of NAD(+), resulting in the formation of chanoclavine-I aldehyde. Agroclavine dehydrogenase easG then mediates the conversion of chanoclavine-I aldehyde to agroclavine via a non-enzymatic adduct reaction: the substrate is an iminium intermediate that is formed spontaneously from chanoclavine-I aldehyde in the presence of glutathione. The presence of easA is not required to complete this reaction. Further conversion of agroclavine to paspalic acid is a two-step process involving oxidation of agroclavine to elymoclavine and of elymoclavine to paspalic acid, the second step being performed by the elymoclavine oxidase cloA. Paspalic acid is then further converted to D-lysergic acid. Ergopeptines are assembled from D-lysergic acid and three different amino acids by the D-lysergyl-peptide-synthetases composed each of a monomudular and a trimodular nonribosomal peptide synthetase subunit. LpsB and lpsC encode the monomodular subunits responsible for D-lysergic acid activation and incorporation into the ergopeptine backbone. LpsA1 and A2 subunits encode the trimodular nonribosomal peptide synthetase assembling the tripeptide portion of ergopeptines. LpsA1 is responsible for formation of the major ergopeptine, ergotamine, and lpsA2 for alpha-ergocryptine, the minor ergopeptine of the total alkaloid mixture elaborated by C.purpurea. D-lysergyl-tripeptides are assembled by the nonribosomal peptide synthetases and released as N-(D-lysergyl-aminoacyl)-lactams. Cyclolization of the D-lysergyl-tripeptides is performed by the Fe(2+)/2-ketoglutarate-dependent dioxygenase easH which introduces a hydroxyl group into N-(D-lysergyl-aminoacyl)-lactam at alpha-C of the aminoacyl residue followed by spontaneous condensation with the terminal lactam carbonyl group. This is D-lysergyl-peptide-synthetase subunit 2 from Claviceps purpurea (strain 20.1) (Ergot fungus).